The chain runs to 71 residues: DNA-directed RNA polymerase subunit omega (71 aa).

Belongs to the RNA polymerase subunit omega family. The RNAP catalytic core consists of 2 alpha, 1 beta, 1 beta' and 1 omega subunit. When a sigma factor is associated with the core the holoenzyme is formed, which can initiate transcription.

The enzyme catalyses RNA(n) + a ribonucleoside 5'-triphosphate = RNA(n+1) + diphosphate. Its function is as follows. Promotes RNA polymerase assembly. Latches the N- and C-terminal regions of the beta' subunit thereby facilitating its interaction with the beta and alpha subunits. This Campylobacter concisus (strain 13826) protein is DNA-directed RNA polymerase subunit omega.